We begin with the raw amino-acid sequence, 78 residues long: Small ribosomal subunit protein bS18 (78 aa).

Belongs to the bacterial ribosomal protein bS18 family. In terms of assembly, part of the 30S ribosomal subunit. Forms a tight heterodimer with protein bS6.

Its function is as follows. Binds as a heterodimer with protein bS6 to the central domain of the 16S rRNA, where it helps stabilize the platform of the 30S subunit. The polypeptide is Small ribosomal subunit protein bS18 (Nocardioides sp. (strain ATCC BAA-499 / JS614)).